Consider the following 396-residue polypeptide: OTU domain-containing protein 3 (396 aa).

The segment at 1 to 49 (MSRKQAAKSRPGSGGRRAEAERKRDERAARRALAKERRNRPDPGGSGCE) is disordered. Residues 16–41 (RRAEAERKRDERAARRALAKERRNRP) show a composition bias toward basic and acidic residues. Positions 64-188 (LKLREVPGDG…GEHYDSVRRI (125 aa)) constitute an OTU domain. K65 is subject to N6-acetyllysine. Positions 69–75 (VPGDGNC) are cys-loop. The active site involves D72. C75 functions as the Nucleophile in the catalytic mechanism. An N6-acetyllysine mark is found at K121 and K128. Positions 126–136 (LSKPGTFAGND) are variable-loop. The his-loop stretch occupies residues 176-181 (YRYGEH). The active site involves H181. Position 219 is an N6-acetyllysine (K219). The UBA-like domain maps to 229–269 (DDVEDAVHKVGSATGCTDFNLIVQNLEAENYNIKSAITALL). The tract at residues 275 to 381 (TGNDAEENHE…RDTGRSEADM (107 aa)) is disordered. Composition is skewed to basic and acidic residues over residues 280–301 (EENH…EAGS), 312–331 (NEGR…ESKA), and 343–379 (QRRE…RSEA). K290 carries the post-translational modification N6-acetyllysine.

Glucose and fatty acids stimulate CREBBP-dependent acetylation, promoting its nuclear translocation.

Its subcellular location is the cytoplasm. The protein resides in the nucleus. The enzyme catalyses Thiol-dependent hydrolysis of ester, thioester, amide, peptide and isopeptide bonds formed by the C-terminal Gly of ubiquitin (a 76-residue protein attached to proteins as an intracellular targeting signal).. Functionally, deubiquitinating enzyme that hydrolyzes 'Lys-6'- and 'Lys-11'-linked polyubiquitin. Also hydrolyzes heterotypic (mixed and branched) and homotypic chains. Important regulator of energy metabolism. Glucose and fatty acids trigger its nuclear translocation by CBP-dependent acetylation. In the nucleus, deubiquitinates and stabilizes the nuclear receptor PPARD regulating the expression of various genes involved in glucose and lipid metabolism and oxidative phosphorylation. Also acts as a negative regulator of the ribosome quality control (RQC) by mediating deubiquitination of 40S ribosomal proteins RPS10/eS10 and RPS20/uS10, thereby antagonizing ZNF598-mediated 40S ubiquitination. This is OTU domain-containing protein 3 (Otud3) from Mus musculus (Mouse).